Consider the following 156-residue polypeptide: FAD synthase (156 aa).

Residues 16 to 17 (TF), 21 to 24 (HPGH), D101, and Y129 contribute to the ATP site.

It belongs to the archaeal FAD synthase family. As to quaternary structure, homodimer. Requires a divalent metal cation as cofactor.

It carries out the reaction FMN + ATP + H(+) = FAD + diphosphate. It participates in cofactor biosynthesis; FAD biosynthesis; FAD from FMN: step 1/1. Catalyzes the transfer of the AMP portion of ATP to flavin mononucleotide (FMN) to produce flavin adenine dinucleotide (FAD) coenzyme. The polypeptide is FAD synthase (Methanococcus aeolicus (strain ATCC BAA-1280 / DSM 17508 / OCM 812 / Nankai-3)).